Reading from the N-terminus, the 217-residue chain is Protein GrpE (217 aa).

The tract at residues 1 to 63 (MAETSNSENK…AADSELSLQS (63 aa)) is disordered. Positions 10–32 (KTSEEAKASEKNSRSITLEETKL) are enriched in basic and acidic residues. Positions 37 to 63 (SEESTQTTESTQAQAAEAADSELSLQS) are enriched in low complexity.

This sequence belongs to the GrpE family. As to quaternary structure, homodimer.

The protein resides in the cytoplasm. Participates actively in the response to hyperosmotic and heat shock by preventing the aggregation of stress-denatured proteins, in association with DnaK and GrpE. It is the nucleotide exchange factor for DnaK and may function as a thermosensor. Unfolded proteins bind initially to DnaJ; upon interaction with the DnaJ-bound protein, DnaK hydrolyzes its bound ATP, resulting in the formation of a stable complex. GrpE releases ADP from DnaK; ATP binding to DnaK triggers the release of the substrate protein, thus completing the reaction cycle. Several rounds of ATP-dependent interactions between DnaJ, DnaK and GrpE are required for fully efficient folding. The chain is Protein GrpE from Leptospira borgpetersenii serovar Hardjo-bovis (strain JB197).